The sequence spans 522 residues: 3'3'-cGAMP-specific phosphodiesterase 2 (522 aa).

The region spanning 36–160 (CVLLVDDDEQ…QKLRTLLYSM (125 aa)) is the Response regulatory domain. The residue at position 91 (aspartate 91) is a 4-aspartylphosphate. The 198-residue stretch at 325–522 (LRETSKELVY…FIAIRASLPD (198 aa)) folds into the HD-GYP domain. Residues histidine 382 and aspartate 383 each coordinate a divalent metal cation. Lysine 386 serves as the catalytic Proton donor. A divalent metal cation is bound by residues histidine 411, histidine 437, histidine 438, and aspartate 466.

As to quaternary structure, homodimer. It depends on Mn(2+) as a cofactor.

The enzyme catalyses 3',3'-cGAMP + H2O = 5'-pApG-3' + H(+). In terms of biological role, phosphodiesterase (PDE) that catalyzes the hydrolysis of 3'3'-cyclic GMP-AMP (3'3'-cGAMP), leading to linear 5'-pApG. Counteracts the function of the 3'3'-cGAMP synthase DncV, and is involved in the modulation of intracellular 3'3'-cGAMP levels. Enhances bacterial chemotaxis and inhibits intestinal colonization in vivo. Thus exerts a crucial role in regulating bacterial infectivity through catalyzing 3'3'-cGAMP degradation. Is specific for 3'3'-cGAMP since it cannot degrade other cGAMP linkage isomers (3'2'-, 2'3'-, and 2'2'-cGAMPs). Is also able to hydrolyze c-di-GMP but not c-di-AMP. This Vibrio cholerae serotype O1 (strain ATCC 39315 / El Tor Inaba N16961) protein is 3'3'-cGAMP-specific phosphodiesterase 2.